A 737-amino-acid polypeptide reads, in one-letter code: FYVE, RhoGEF and PH domain-containing protein 3 (737 aa).

The segment at 1–151 (MESGGGSSTP…KADKDAGLAQ (151 aa)) is disordered. Residues 126 to 136 (ADSDVGEEPDS) are compositionally biased toward acidic residues. Serine 128 carries the post-translational modification Phosphoserine. In terms of domain architecture, DH spans 157-341 (KLLHIAQELL…STAANHSNAA (185 aa)). Residues 370-469 (ELIKEGQIQK…WIQIIQATIE (100 aa)) form the PH 1 domain. Positions 487-533 (QDEDPSLSPDMPITSTSPVEPVVTTEGGSGAAGLEPRKLSSKTRRDK) are disordered. The span at 500–512 (TSTSPVEPVVTTE) shows a compositional bias: low complexity. A compositionally biased stretch (basic and acidic residues) spans 521–533 (EPRKLSSKTRRDK). Residues 532 to 588 (DKEKQSCKSCGETFNSITKRRHHCKLCGVVICGKCSEFKAENSRQSRVCRECFLTQP) form an FYVE-type zinc finger. Residues cysteine 538, cysteine 541, cysteine 555, cysteine 558, cysteine 563, cysteine 566, cysteine 580, and cysteine 583 each coordinate Zn(2+). Disordered regions lie at residues 589-620 (VAPE…SLLC) and 713-737 (AARG…AAAP). The PH 2 domain maps to 616–715 (PSLLCGPLRL…WLETLSTAAR (100 aa)).

It localises to the cytoplasm. It is found in the cytoskeleton. Promotes the formation of filopodia. May activate CDC42, a member of the Ras-like family of Rho- and Rac proteins, by exchanging bound GDP for free GTP. Plays a role in regulating the actin cytoskeleton and cell shape. The sequence is that of FYVE, RhoGEF and PH domain-containing protein 3 (FGD3) from Pongo abelii (Sumatran orangutan).